We begin with the raw amino-acid sequence, 353 residues long: Photosystem II protein D1 (353 aa).

The residue at position 2 (Thr2) is an N-acetylthreonine. At Thr2 the chain carries Phosphothreonine. The next 3 membrane-spanning stretches (helical) occupy residues 29–46 (YIGWFGVLMIPTLLTATS), 118–133 (HFLLGVACYMGREWEL), and 142–156 (WIAVAYSAPVAAATA). His118 contacts chlorophyll a. Tyr126 is a pheophytin a binding site. The [CaMn4O5] cluster site is built by Asp170 and Glu189. Residues 197-218 (FHMLGVAGVFGGSLFSAMHGSL) traverse the membrane as a helical segment. A chlorophyll a-binding site is contributed by His198. A quinone-binding positions include His215 and 264-265 (SF). His215 contributes to the Fe cation binding site. His272 lines the Fe cation pocket. A helical transmembrane segment spans residues 274–288 (FLAAWPVIGIWFTAL). [CaMn4O5] cluster is bound by residues His332, Glu333, Asp342, and Ala344. A propeptide spanning residues 345–353 (AVEAPSTNG) is cleaved from the precursor.

The protein belongs to the reaction center PufL/M/PsbA/D family. As to quaternary structure, PSII is composed of 1 copy each of membrane proteins PsbA, PsbB, PsbC, PsbD, PsbE, PsbF, PsbH, PsbI, PsbJ, PsbK, PsbL, PsbM, PsbT, PsbX, PsbY, PsbZ, Psb30/Ycf12, at least 3 peripheral proteins of the oxygen-evolving complex and a large number of cofactors. It forms dimeric complexes. It depends on The D1/D2 heterodimer binds P680, chlorophylls that are the primary electron donor of PSII, and subsequent electron acceptors. It shares a non-heme iron and each subunit binds pheophytin, quinone, additional chlorophylls, carotenoids and lipids. D1 provides most of the ligands for the Mn4-Ca-O5 cluster of the oxygen-evolving complex (OEC). There is also a Cl(-1) ion associated with D1 and D2, which is required for oxygen evolution. The PSII complex binds additional chlorophylls, carotenoids and specific lipids. as a cofactor. In terms of processing, tyr-161 forms a radical intermediate that is referred to as redox-active TyrZ, YZ or Y-Z. Post-translationally, C-terminally processed by CTPA; processing is essential to allow assembly of the oxygen-evolving complex and thus photosynthetic growth.

The protein resides in the plastid. The protein localises to the chloroplast thylakoid membrane. The catalysed reaction is 2 a plastoquinone + 4 hnu + 2 H2O = 2 a plastoquinol + O2. In terms of biological role, photosystem II (PSII) is a light-driven water:plastoquinone oxidoreductase that uses light energy to abstract electrons from H(2)O, generating O(2) and a proton gradient subsequently used for ATP formation. It consists of a core antenna complex that captures photons, and an electron transfer chain that converts photonic excitation into a charge separation. The D1/D2 (PsbA/PsbD) reaction center heterodimer binds P680, the primary electron donor of PSII as well as several subsequent electron acceptors. This Buxus microphylla (Littleleaf boxwood) protein is Photosystem II protein D1.